Consider the following 114-residue polypeptide: Iron-sulfur cluster insertion protein ErpA (114 aa).

Positions 42, 106, and 108 each coordinate iron-sulfur cluster.

The protein belongs to the HesB/IscA family. In terms of assembly, homodimer. It depends on iron-sulfur cluster as a cofactor.

Required for insertion of 4Fe-4S clusters for at least IspG. The polypeptide is Iron-sulfur cluster insertion protein ErpA (Haemophilus influenzae (strain PittEE)).